A 572-amino-acid polypeptide reads, in one-letter code: NADH-ubiquinone oxidoreductase chain 5 (572 aa).

A run of 17 helical transmembrane segments spans residues 6-26 (FFFL…YLMI), 44-64 (VVMT…VMYI), 86-106 (IMIV…PNLI), 107-127 (SILL…IYYQ), 147-167 (VAIL…YIYY), 179-201 (IITL…SSWL), 208-230 (PTPV…LLIR), 234-254 (MLMV…TMFM), 268-288 (IIAL…SMGY), 291-311 (LAFF…MCAG), 337-357 (SICF…AGFY), 372-394 (NFFI…FRLF), 422-442 (IGLL…IFPV), 454-474 (FLTL…SDFV), 479-499 (LFSL…FMPF), 524-544 (WGEL…INYI), and 552-572 (FKVY…LFFL).

Belongs to the complex I subunit 5 family.

Its subcellular location is the mitochondrion inner membrane. The catalysed reaction is a ubiquinone + NADH + 5 H(+)(in) = a ubiquinol + NAD(+) + 4 H(+)(out). Its function is as follows. Core subunit of the mitochondrial membrane respiratory chain NADH dehydrogenase (Complex I) that is believed to belong to the minimal assembly required for catalysis. Complex I functions in the transfer of electrons from NADH to the respiratory chain. The immediate electron acceptor for the enzyme is believed to be ubiquinone. The sequence is that of NADH-ubiquinone oxidoreductase chain 5 (ND5) from Locusta migratoria (Migratory locust).